Here is a 239-residue protein sequence, read N- to C-terminus: Ribonuclease PH (239 aa).

Phosphate contacts are provided by residues Arg-86 and 124 to 126; that span reads GTR.

The protein belongs to the RNase PH family. Homohexameric ring arranged as a trimer of dimers.

It catalyses the reaction tRNA(n+1) + phosphate = tRNA(n) + a ribonucleoside 5'-diphosphate. Functionally, phosphorolytic 3'-5' exoribonuclease that plays an important role in tRNA 3'-end maturation. Removes nucleotide residues following the 3'-CCA terminus of tRNAs; can also add nucleotides to the ends of RNA molecules by using nucleoside diphosphates as substrates, but this may not be physiologically important. Probably plays a role in initiation of 16S rRNA degradation (leading to ribosome degradation) during starvation. This chain is Ribonuclease PH, found in Rhizobium etli (strain ATCC 51251 / DSM 11541 / JCM 21823 / NBRC 15573 / CFN 42).